We begin with the raw amino-acid sequence, 343 residues long: Methionine import ATP-binding protein MetN 1 (343 aa).

The region spanning 2–241 (IKLTHISKVF…PKTPLAQQFI (240 aa)) is the ABC transporter domain. ATP is bound at residue 38-45 (GASGAGKS).

The protein belongs to the ABC transporter superfamily. Methionine importer (TC 3.A.1.24) family. As to quaternary structure, the complex is composed of two ATP-binding proteins (MetN), two transmembrane proteins (MetI) and a solute-binding protein (MetQ).

Its subcellular location is the cell inner membrane. The catalysed reaction is L-methionine(out) + ATP + H2O = L-methionine(in) + ADP + phosphate + H(+). It carries out the reaction D-methionine(out) + ATP + H2O = D-methionine(in) + ADP + phosphate + H(+). Its function is as follows. Part of the ABC transporter complex MetNIQ involved in methionine import. Responsible for energy coupling to the transport system. The polypeptide is Methionine import ATP-binding protein MetN 1 (Yersinia pestis bv. Antiqua (strain Antiqua)).